Reading from the N-terminus, the 196-residue chain is Putative NADH dehydrogenase/NAD(P)H nitroreductase Rpal_4764 (196 aa).

The protein belongs to the nitroreductase family. HadB/RutE subfamily. The cofactor is FMN.

The chain is Putative NADH dehydrogenase/NAD(P)H nitroreductase Rpal_4764 from Rhodopseudomonas palustris (strain TIE-1).